The chain runs to 487 residues: UDP-N-acetylmuramate--L-alanine ligase (487 aa).

ATP is bound at residue glycine 130–threonine 136.

Belongs to the MurCDEF family.

The protein localises to the cytoplasm. The enzyme catalyses UDP-N-acetyl-alpha-D-muramate + L-alanine + ATP = UDP-N-acetyl-alpha-D-muramoyl-L-alanine + ADP + phosphate + H(+). Its pathway is cell wall biogenesis; peptidoglycan biosynthesis. Cell wall formation. In Photobacterium profundum (strain SS9), this protein is UDP-N-acetylmuramate--L-alanine ligase.